The following is a 215-amino-acid chain: Large ribosomal subunit protein bL25 (215 aa).

Over residues 192–202 the composition is skewed to acidic residues; the sequence is EEEEVEEEVAE. The disordered stretch occupies residues 192 to 215; it reads EEEEVEEEVAEPEVIKRKEEEEEE. A compositionally biased stretch (basic and acidic residues) spans 204 to 215; the sequence is EVIKRKEEEEEE.

The protein belongs to the bacterial ribosomal protein bL25 family. CTC subfamily. In terms of assembly, part of the 50S ribosomal subunit; part of the 5S rRNA/L5/L18/L25 subcomplex. Contacts the 5S rRNA. Binds to the 5S rRNA independently of L5 and L18.

This is one of the proteins that binds to the 5S RNA in the ribosome where it forms part of the central protuberance. The protein is Large ribosomal subunit protein bL25 of Thermotoga neapolitana (strain ATCC 49049 / DSM 4359 / NBRC 107923 / NS-E).